A 280-amino-acid polypeptide reads, in one-letter code: MVRLDLADVVLRRMQEKDIEAVKALIKEGCEGTENRLILHLLTRPLALLLLAILSSILRCVLHSFVLALVIPVFISVIYLKLTIPRSAGILGSCRPYWDYIGSSYHADTEPDLPNPHLGRAKLTTNQEKTRRRKKAKEKEKMNESEQVDEDELKQRAKVAGEVWVADSDGEIVGCVARDGWSRDGVCRVCRLVVQCWYRREGLGRLLVQGLESRTKQKGVCRVYAHVPIPSKVGEAFFRRLGYRLQGETAGIEEEEEDDYEDPEKGWLGYPLTKVFVKDL.

2 helical membrane passes run 37 to 57 (LILH…LSSI) and 60 to 80 (CVLH…VIYL). A disordered region spans residues 111–152 (PDLPNPHLGRAKLTTNQEKTRRRKKAKEKEKMNESEQVDEDE). The N-acetyltransferase domain occupies 116–273 (PHLGRAKLTT…EKGWLGYPLT (158 aa)).

It belongs to the camello family.

Its subcellular location is the membrane. Its function is as follows. Probable acetyltransferase. The sequence is that of Probable N-acetyltransferase 14 (nat14) from Danio rerio (Zebrafish).